A 257-amino-acid polypeptide reads, in one-letter code: MRILDYDKVIERILEFIREKGNNGVVIGISGGVDSATVAYLATKALGKEKVLGLIMPYFENKDVEDAKLVAEKLGIGYKVINIKPIVDSFVENLELNLDRKGLGNIMSRTRMIMLYAHANSLGRIVLGTSNRSEFLTGYFTKWGDGASDYAPIINLYKTEVWEIAKRIGVPERIVKKKPSAGLWEGQTDEDELGISYNLLDEILWRMIDLKIGKEEIAKDLGIPLSLVERVEELIKKSEHKRRLPIGPSFEDLIVGP.

28–35 (GISGGVDS) lines the ATP pocket. Residue Asp-34 participates in Mg(2+) binding. Position 109 (Arg-109) interacts with deamido-NAD(+). Thr-129 serves as a coordination point for ATP. Residue Glu-134 participates in Mg(2+) binding. Residues Lys-142 and Asp-149 each contribute to the deamido-NAD(+) site. ATP contacts are provided by Lys-158 and Ser-180. Residue 240–241 (HK) coordinates deamido-NAD(+).

The protein belongs to the NAD synthetase family. Homodimer.

It catalyses the reaction deamido-NAD(+) + NH4(+) + ATP = AMP + diphosphate + NAD(+) + H(+). It participates in cofactor biosynthesis; NAD(+) biosynthesis; NAD(+) from deamido-NAD(+) (ammonia route): step 1/1. In terms of biological role, catalyzes the ATP-dependent amidation of deamido-NAD to form NAD. Uses ammonia as a nitrogen source. The polypeptide is NH(3)-dependent NAD(+) synthetase (Pyrococcus horikoshii (strain ATCC 700860 / DSM 12428 / JCM 9974 / NBRC 100139 / OT-3)).